Here is a 249-residue protein sequence, read N- to C-terminus: NADH-quinone oxidoreductase subunit C (249 aa).

Residues 1 to 29 (MTENQTTPDPGEPGSSADRPGGLVPTGDS) form a disordered region.

The protein belongs to the complex I 30 kDa subunit family. As to quaternary structure, NDH-1 is composed of 14 different subunits. Subunits NuoB, C, D, E, F, and G constitute the peripheral sector of the complex.

It is found in the cell membrane. The enzyme catalyses a quinone + NADH + 5 H(+)(in) = a quinol + NAD(+) + 4 H(+)(out). In terms of biological role, NDH-1 shuttles electrons from NADH, via FMN and iron-sulfur (Fe-S) centers, to quinones in the respiratory chain. The immediate electron acceptor for the enzyme in this species is believed to be a menaquinone. Couples the redox reaction to proton translocation (for every two electrons transferred, four hydrogen ions are translocated across the cytoplasmic membrane), and thus conserves the redox energy in a proton gradient. In Saccharopolyspora erythraea (strain ATCC 11635 / DSM 40517 / JCM 4748 / NBRC 13426 / NCIMB 8594 / NRRL 2338), this protein is NADH-quinone oxidoreductase subunit C.